The chain runs to 261 residues: Probable septum site-determining protein MinC (261 aa).

Residues 106 to 145 are disordered; sequence RAPAAKPADEAEPAAVPAVETAAAPAAAAAPEQPSEPAPT. The span at 118–144 shows a compositional bias: low complexity; it reads PAAVPAVETAAAPAAAAAPEQPSEPAP.

This sequence belongs to the MinC family. In terms of assembly, interacts with MinD and FtsZ.

Functionally, cell division inhibitor that blocks the formation of polar Z ring septums. Rapidly oscillates between the poles of the cell to destabilize FtsZ filaments that have formed before they mature into polar Z rings. Prevents FtsZ polymerization. The sequence is that of Probable septum site-determining protein MinC from Burkholderia orbicola (strain AU 1054).